A 678-amino-acid chain; its full sequence is Glycine--tRNA ligase beta subunit (678 aa).

Belongs to the class-II aminoacyl-tRNA synthetase family. In terms of assembly, tetramer of two alpha and two beta subunits.

It localises to the cytoplasm. The enzyme catalyses tRNA(Gly) + glycine + ATP = glycyl-tRNA(Gly) + AMP + diphosphate. The sequence is that of Glycine--tRNA ligase beta subunit from Sulfurihydrogenibium sp. (strain YO3AOP1).